A 380-amino-acid chain; its full sequence is Cyclohexane-1-carbonyl-CoA dehydrogenase (380 aa).

It belongs to the acyl-CoA dehydrogenase family. Homotetramer. FAD serves as cofactor.

It catalyses the reaction cyclohexane-1-carbonyl-CoA + oxidized [electron-transfer flavoprotein] + H(+) = cyclohex-1-ene-1-carbonyl-CoA + reduced [electron-transfer flavoprotein]. Functionally, acyl-CoA dehydrogenase involved in the anaerobic degradation of cyclohexane carboxylic acid (CHC). Catalyzes the 1,2-dehydrogenation of cyclohexane-1-carbonyl-CoA (CHCoA) to cyclohex-1-ene-1-carbonyl-CoA (CHeneCoA). An alternative substrate, cyclohex-3-ene-1-carboxyl-CoA can be converted to the corresponding cyclohexadiene-1-carboxyl-CoA isomers (30% rate compared to CHC). The chain is Cyclohexane-1-carbonyl-CoA dehydrogenase from Geobacter metallireducens (strain ATCC 53774 / DSM 7210 / GS-15).